The sequence spans 859 residues: DNA (cytosine-5)-methyltransferase 3B (859 aa).

Residues M1 to Y305 form an interaction with DNMT1 and DNMT3A region. The interval G25–D226 is disordered. Residues D85 to N94 show a composition bias toward acidic residues. S96 is subject to Phosphoserine. K102 is covalently cross-linked (Glycyl lysine isopeptide (Lys-Gly) (interchain with G-Cter in SUMO2)). Residues L103–S114 show a composition bias toward basic and acidic residues. Position 112 is a phosphothreonine (T112). S116 bears the Phosphoserine mark. Residues S167–S179 show a composition bias toward low complexity. Polar residues predominate over residues K189–L198. The segment covering A214–D226 has biased composition (basic and acidic residues). At S216 the chain carries Phosphoserine. The PWWP domain maps to I232–F290. A disordered region spans residues K348–V429. Basic and acidic residues-rich tracts occupy residues R370–R381 and G412–A426. At R415 the chain carries Citrulline. The ADD domain maps to E428–D560. A GATA-type; atypical zinc finger spans residues R439–E469. An interaction with the PRC2/EED-EZH2 complex region spans residues C440 to C532. The PHD-type; atypical zinc-finger motif lies at Q480–R536. The 279-residue stretch at I581–E859 folds into the SAM-dependent MTase C5-type domain. Residues D588–T592 and E611 contribute to the S-adenosyl-L-methionine site. K623 participates in a covalent cross-link: Glycyl lysine isopeptide (Lys-Gly) (interchain with G-Cter in SUMO2). D633–R635 is an S-adenosyl-L-methionine binding site. C657 is an active-site residue. R838 to W840 is an S-adenosyl-L-methionine binding site.

Belongs to the class I-like SAM-binding methyltransferase superfamily. C5-methyltransferase family. Interacts with CBX4, DNMT1, DNMT3A, SETDB1, UBE2I9, UBL1 and ZHX1. Interacts with SUV39H1 and BAZ2A/TIP5. Interacts with the PRC2/EED-EZH2 complex. Interacts with UHRF1. Sumoylated. Post-translationally, citrullinated by PADI4.

Its subcellular location is the nucleus. The enzyme catalyses a 2'-deoxycytidine in DNA + S-adenosyl-L-methionine = a 5-methyl-2'-deoxycytidine in DNA + S-adenosyl-L-homocysteine + H(+). Its activity is regulated as follows. Activated by binding to the regulatory factor DNMT3L. Its function is as follows. Required for genome-wide de novo methylation and is essential for the establishment of DNA methylation patterns during development. DNA methylation is coordinated with methylation of histones. May preferentially methylates nucleosomal DNA within the nucleosome core region. May function as transcriptional co-repressor by associating with CBX4 and independently of DNA methylation. Seems to be involved in gene silencing. In association with DNMT1 and via the recruitment of CTCFL/BORIS, involved in activation of BAG1 gene expression by modulating dimethylation of promoter histone H3 at H3K4 and H3K9. Functions as a transcriptional corepressor by associating with ZHX1. Required for DUX4 silencing in somatic cells. This Mus musculus (Mouse) protein is DNA (cytosine-5)-methyltransferase 3B (Dnmt3b).